The chain runs to 810 residues: RING finger protein unkempt homolog (810 aa).

A disordered region spans residues 1 to 24 (MSKGPGPGGSAASSAPPAATAQVL). The segment covering 10-19 (SAASSAPPAA) has biased composition (low complexity). 5 C3H1-type zinc fingers span residues 84 to 113 (YSPDVYCTKYDEATGLCPEGDECPFLHRTT), 124 to 154 (YYKTGICIHETDSKGNCTKNGLHCAFAHGPH), 215 to 241 (NYKTEPCKKPPRLCRQGYACPYYHNSK), 251 to 285 (KYRSSPCPNVKHGDEWGDPGKCENGDACQYCHTRT), and 293 to 321 (IYKSTKCNDMQQSGSCPRGPFCAFAHVEQ). Positions 239–265 (NSKDRRRSPRKHKYRSSPCPNVKHGDE) are disordered. Ser240 bears the Phosphoserine mark. Residues 241 to 253 (KDRRRSPRKHKYR) show a composition bias toward basic residues. The disordered stretch occupies residues 324-343 (LSDDLQPSSAVSSPTQPGPV). Positions 328–338 (LQPSSAVSSPT) are enriched in polar residues. Phosphoserine occurs at positions 374, 378, 385, and 631. Positions 643–723 (GAAELARLRQ…QEELERLHAG (81 aa)) form a coiled coil. The segment at 766 to 801 (SVKCLKCQEQKRAVLPCQHAALCELCAEGSECPICQ) adopts an RING-type; degenerate zinc-finger fold.

Belongs to the unkempt family.

Its subcellular location is the cytoplasm. Its function is as follows. Sequence-specific RNA-binding protein which plays an important role in the establishment and maintenance of the early morphology of cortical neurons during embryonic development. Acts as a translation repressor and controls a translationally regulated cell morphology program to ensure proper structuring of the nervous system. Translational control depends on recognition of its binding element within target mRNAs which consists of a mandatory UAG trimer upstream of a U/A-rich motif. Associated with polysomes. The polypeptide is RING finger protein unkempt homolog (UNK) (Homo sapiens (Human)).